The sequence spans 401 residues: Zinc finger CCHC domain-containing protein 12 (401 aa).

Disordered stretches follow at residues M1 to P20 and D270 to P292. The segment covering D270–D282 has biased composition (acidic residues). The CCHC-type zinc-finger motif lies at V345–N362.

The protein belongs to the ZCCHC12 family. Interacts with SMAD1 and CREB-binding protein (CBP). Forms a protein-DNA complex through its association with SMAD1.

Functionally, transcriptional coactivator in the bone morphogenetic protein (BMP)-signaling pathway. It positively modulates BMP signaling by interacting with SMAD1 and associating with CBP in the transcription complex. It contributes to the BMP-induced enhancement of cholinergic-neuron-specific gene expression. This is Zinc finger CCHC domain-containing protein 12 (Zcchc12) from Rattus norvegicus (Rat).